We begin with the raw amino-acid sequence, 55 residues long: Large ribosomal subunit protein bL33 (55 aa).

The protein belongs to the bacterial ribosomal protein bL33 family.

The sequence is that of Large ribosomal subunit protein bL33 from Bartonella bacilliformis (strain ATCC 35685 / KC583 / Herrer 020/F12,63).